The primary structure comprises 90 residues: Spore coat protein F-like protein YgzC (90 aa).

The protein belongs to the CotF family.

It localises to the spore coat. The chain is Spore coat protein F-like protein YgzC (ygzC) from Bacillus subtilis (strain 168).